The sequence spans 89 residues: Alpha-ketoglutarate dehydrogenase subunit 4, mitochondrial (89 aa).

Belongs to the alpha-ketoglutarate dehydrogenase component 4 family. Component of the 2-oxoglutarate dehydrogenase complex (OGDC), also called alpha-ketoglutarate dehydrogenase (KGDH) complex. The copmplex is composed of the catalytic subunits OGDH (2-oxoglutarate dehydrogenase kgd1; also called E1 subunit), DLST (dihydrolipoamide succinyltransferase kgd2; also called E2 subunit) and DLD (dihydrolipoamide dehydrogenase dld1; also called E3 subunit), and the assembly factor KGD4. Within OGDC, interacts (via N-terminus) with E3 subunit and (via C-terminus) with the complex core formed by E1 and E2 subunits.

Its subcellular location is the mitochondrion. Molecular adapter that is necessary to a form a stable 2-oxoglutarate dehydrogenase enzyme complex (OGDC). Required for incorporation of the E3 subunit (dld1) into the E1-E2 core (kgd1-kgd2) of mitochondrial OGDC, and acting as a stability factor for the fully assembled complex. The chain is Alpha-ketoglutarate dehydrogenase subunit 4, mitochondrial (kgd4) from Schizosaccharomyces pombe (strain 972 / ATCC 24843) (Fission yeast).